A 246-amino-acid chain; its full sequence is UDP-N-acetyl-D-mannosaminuronic acid transferase (246 aa).

This sequence belongs to the glycosyltransferase 26 family.

The catalysed reaction is UDP-N-acetyl-alpha-D-mannosaminouronate + N-acetyl-alpha-D-glucosaminyl-di-trans,octa-cis-undecaprenyl diphosphate = beta-D-ManNAcA-(1-&gt;4)-alpha-D-GlcNAc-di-trans,octa-cis-undecaprenyl diphosphate + UDP + H(+). It functions in the pathway bacterial outer membrane biogenesis; enterobacterial common antigen biosynthesis. Its function is as follows. Catalyzes the synthesis of Und-PP-GlcNAc-ManNAcA (Lipid II), the second lipid-linked intermediate involved in enterobacterial common antigen (ECA) synthesis. This is UDP-N-acetyl-D-mannosaminuronic acid transferase from Escherichia coli O127:H6 (strain E2348/69 / EPEC).